The primary structure comprises 158 residues: Pycsar effector protein SaPycTM (158 aa).

Helical transmembrane passes span 20–40 (FADAKALAIISINGFILNFNF), 53–73 (IFNFTAFILLIITIILAAFAV), and 136–156 (VFIISALGYSCLLFSSIFQII).

Its subcellular location is the cell membrane. Pycsar (pyrimidine cyclase system for antiphage resistance) provides immunity against bacteriophage. The pyrimidine cyclase (PycC) synthesizes cyclic nucleotides in response to infection; these serve as specific second messenger signals. The signals activate the adjacent effector, leading to bacterial cell death and abortive phage infection. A clade E Pycsar system. Its function is as follows. The effector gene of a two-gene Pycsar system. Expression of this and adjacent SaPycC cytidylate cyclase (AC P0DV38) probably confers resistance to bacteriophage. The genes are probably only expressed in response to bacteriophage infection. Probably only responds to cCMP (produced by its cognate NTP cyclase), acts by impairing membrane integrity. This is Pycsar effector protein SaPycTM from Staphylococcus aureus.